A 976-amino-acid chain; its full sequence is Vacuolar membrane protease (976 aa).

At 1–15 (MKLKSVFRSVLKYRK) the chain is on the cytoplasmic side. Residues 16–36 (TNLSLLLLITYSIITLLYIFD) traverse the membrane as a helical segment. Over 37–359 (HERYKLNLPK…KFFVISAKTL (323 aa)) the chain is Vacuolar. Asn96 and Asn121 each carry an N-linked (GlcNAc...) asparagine glycan. 2 residues coordinate Zn(2+): His156 and Asp168. Asn189 carries an N-linked (GlcNAc...) asparagine glycan. The Proton acceptor role is filled by Glu200. Glu201 provides a ligand contact to Zn(2+). A glycan (N-linked (GlcNAc...) asparagine) is linked at Asn217. The Zn(2+) site is built by Glu226 and His300. Residues 360 to 380 (FYWNCIFLLVSPVVAIGLYLI) traverse the membrane as a helical segment. The Cytoplasmic portion of the chain corresponds to 381–392 (SRDRMTWKSYSW). Residues 393–412 (LSWTRFPLSLAAGIIVQKLF) form a helical membrane-spanning segment. Residues 413-428 (SNDIIRSNPLTFSRNY) are Vacuolar-facing. The chain crosses the membrane as a helical span at residues 429–449 (FWPISAFFTQVIFTSYVLINC). Residues 450-461 (SNFFFPCADMKS) lie on the Cytoplasmic side of the membrane. Residues 462–482 (LSIIELFIILWTILLFTSKLL) form a helical membrane-spanning segment. The Vacuolar segment spans residues 483 to 496 (YSSDYRYTGLYPLS). The chain crosses the membrane as a helical span at residues 497–517 (IFFLLSTIAAILRLLALALGM). The Cytoplasmic segment spans residues 518–627 (RTRKRLGREC…NSLKLEYTDY (110 aa)). Residues 528–610 (RDHHSNYSSH…PLLKGSNSME (83 aa)) form a disordered region. Positions 549 to 558 (NLEQPQDQLT) are enriched in polar residues. The segment covering 559-570 (SSQDDQASIQDD) has biased composition (low complexity). Positions 582–601 (NVDEDHGMDSSSQQHDERVP) are enriched in basic and acidic residues. The helical transmembrane segment at 628–648 (AWIIQFLLIVPIPSFILFNSV) threads the bilayer. Over 649–668 (DVIMDALNHTVQEGSKATFD) the chain is Vacuolar. Asn656 carries an N-linked (GlcNAc...) asparagine glycan. Residues 669–689 (VLRFGMVGSILIALPILPFFY) form a helical membrane-spanning segment. Topologically, residues 690–692 (KVN) are cytoplasmic. The helical transmembrane segment at 693 to 713 (YITISLTALLFLISASKTLLV) threads the bilayer. At 714-976 (HPFTNSNPLK…LVIVKDAIIL (263 aa)) the chain is on the vacuolar side. Residues Asn768, Asn796, Asn811, Asn866, and Asn937 are each glycosylated (N-linked (GlcNAc...) asparagine).

Belongs to the peptidase M28 family. The cofactor is Zn(2+). N-glycosylated.

It localises to the vacuole membrane. Functionally, may be involved in vacuolar sorting and osmoregulation. This Saccharomyces cerevisiae (strain ATCC 204508 / S288c) (Baker's yeast) protein is Vacuolar membrane protease.